A 2270-amino-acid chain; its full sequence is Protein DOP1B (2270 aa).

3 disordered regions span residues 548–572 (METPSSDTDPLKESENNPAPEVEGE), 697–716 (LKQRSEQSPNKTTNKETEEE), and 1084–1145 (QEQD…DMPR). A compositionally biased stretch (polar residues) spans 1095–1145 (ADTSTGHNDSDNTSSFTPSSVDLSSDQNYRDNTAGQVTHKNTGQQNMDMPR).

The protein belongs to the DOP1 family.

It localises to the golgi apparatus membrane. May be involved in protein traffic between late Golgi and early endosomes. This chain is Protein DOP1B (dop1b), found in Xenopus laevis (African clawed frog).